The sequence spans 217 residues: Probable rhamnogalacturonan acetylesterase YesY (217 aa).

Ser-11 acts as the Nucleophile in catalysis. Active-site residues include Glu-178 and His-185.

It belongs to the 'GDSL' lipolytic enzyme family.

Its function is as follows. May play a role in the degradation of rhamnogalacturonan derived from plant cell walls. Probably has broad substrate specificity and may degrade several types of acetylated substrates. The chain is Probable rhamnogalacturonan acetylesterase YesY (yesY) from Bacillus subtilis (strain 168).